The sequence spans 746 residues: Rhizobactin receptor (746 aa).

Positions 1–26 are cleaved as a signal peptide; the sequence is MGNNENGGISFCVFVVVIGFGTGAVA. The short motif at 40-47 is the TonB box element; that stretch reads EEIVVTGG. The 112-residue stretch at 52–163 folds into the TBDR plug domain; that stretch reads QISEIARTIY…TGGIINIITK (112 aa). One can recognise a TBDR beta-barrel domain in the interval 169-746; the sequence is EPGLHAEVTG…TFAVSLTKVF (578 aa). The TonB C-terminal box signature appears at 729-746; sequence FDYKGRGRTFAVSLTKVF.

This sequence belongs to the TonB-dependent receptor family.

It is found in the cell outer membrane. In terms of biological role, receptor for the siderophore rhizobactin. This is Rhizobactin receptor (rhtA) from Rhizobium meliloti (strain 1021) (Ensifer meliloti).